The sequence spans 436 residues: GTPase Der (436 aa).

2 EngA-type G domains span residues 4 to 167 (PVIA…PKIE) and 176 to 351 (IRFS…ESHS). GTP is bound by residues 10–17 (GRPNVGKS), 57–61 (DTGGI), 119–122 (NKVD), 182–189 (GRPNVGKS), 229–233 (DTAGM), and 294–297 (NKWD). A KH-like domain is found at 352–436 (IRVQTNVLND…PIHIIARARD (85 aa)).

It belongs to the TRAFAC class TrmE-Era-EngA-EngB-Septin-like GTPase superfamily. EngA (Der) GTPase family. In terms of assembly, associates with the 50S ribosomal subunit.

In terms of biological role, GTPase that plays an essential role in the late steps of ribosome biogenesis. The chain is GTPase Der from Bacillus mycoides (strain KBAB4) (Bacillus weihenstephanensis).